Reading from the N-terminus, the 247-residue chain is Dof zinc finger protein DOF3.5 (247 aa).

A Dof-type zinc finger spans residues 25–79 (PSCPRCGSSNTKFCYYNNYSLTQPRYFCKGCRRYWTKGGSLRNVPVGGGCRKSRR). Residues cysteine 27, cysteine 30, cysteine 52, and cysteine 55 each contribute to the Zn(2+) site. The tract at residues 70–100 (VGGGCRKSRRPKSSSGNNTKTSLTANSGNPG) is disordered. Positions 82–94 (SSSGNNTKTSLTA) are enriched in polar residues.

Its subcellular location is the nucleus. Its function is as follows. Transcription factor that binds specifically to a 5'-AA[AG]G-3' consensus core sequence. The chain is Dof zinc finger protein DOF3.5 (DOF3.5) from Arabidopsis thaliana (Mouse-ear cress).